A 354-amino-acid chain; its full sequence is Uroporphyrinogen decarboxylase (354 aa).

Substrate contacts are provided by residues 27-31, aspartate 77, tyrosine 154, threonine 209, and histidine 327; that span reads RQAGR.

It belongs to the uroporphyrinogen decarboxylase family. In terms of assembly, homodimer.

The protein resides in the cytoplasm. It carries out the reaction uroporphyrinogen III + 4 H(+) = coproporphyrinogen III + 4 CO2. It functions in the pathway porphyrin-containing compound metabolism; protoporphyrin-IX biosynthesis; coproporphyrinogen-III from 5-aminolevulinate: step 4/4. Catalyzes the decarboxylation of four acetate groups of uroporphyrinogen-III to yield coproporphyrinogen-III. The sequence is that of Uroporphyrinogen decarboxylase from Escherichia coli (strain UTI89 / UPEC).